The sequence spans 152 residues: 3-dehydroquinate dehydratase (152 aa).

Tyrosine 22 (proton acceptor) is an active-site residue. 3 residues coordinate substrate: asparagine 73, histidine 79, and aspartate 86. Histidine 99 serves as the catalytic Proton donor. Residues 100–101 and arginine 110 each bind substrate; that span reads LS.

It belongs to the type-II 3-dehydroquinase family. Homododecamer.

The catalysed reaction is 3-dehydroquinate = 3-dehydroshikimate + H2O. The protein operates within metabolic intermediate biosynthesis; chorismate biosynthesis; chorismate from D-erythrose 4-phosphate and phosphoenolpyruvate: step 3/7. In terms of biological role, catalyzes a trans-dehydration via an enolate intermediate. This Gemmatimonas aurantiaca (strain DSM 14586 / JCM 11422 / NBRC 100505 / T-27) protein is 3-dehydroquinate dehydratase.